Consider the following 342-residue polypeptide: MSETSIGPVALTMGDPAGIGPDITLSVWAKRADRPTPPFLYVGDPALLAARAKLLGQTVPICETDCPGAVAAFRQALPVWPVRSPAPVIPGNPDAANASAVTDAIDTAVRLVLAGEASALATNPISKAVLYEAGFRFPGHTEYLADLAARATGVAALPVMMLAGPKLRAVPVTIHIPLKDVPAALTPDLIYETCTITAADLRSRFGLPAPRLAIAGLNPHAGEGGALGREDDAVIRPVIDRLRAEGLDVVGPLPADTMFHDRARETYDVAICMYHDQALIPAKALGFDDSVNVTLGLPFIRTSPDHGTAFSLAGKGIAREESLLAALRLAAELARNAGGTKR.

His140 and Thr141 together coordinate substrate. A divalent metal cation is bound by residues His175, His220, and His275. Substrate contacts are provided by Lys283, Asn292, and Arg301.

It belongs to the PdxA family. In terms of assembly, homodimer. Zn(2+) serves as cofactor. The cofactor is Mg(2+). Requires Co(2+) as cofactor.

Its subcellular location is the cytoplasm. It catalyses the reaction 4-(phosphooxy)-L-threonine + NAD(+) = 3-amino-2-oxopropyl phosphate + CO2 + NADH. It participates in cofactor biosynthesis; pyridoxine 5'-phosphate biosynthesis; pyridoxine 5'-phosphate from D-erythrose 4-phosphate: step 4/5. Its function is as follows. Catalyzes the NAD(P)-dependent oxidation of 4-(phosphooxy)-L-threonine (HTP) into 2-amino-3-oxo-4-(phosphooxy)butyric acid which spontaneously decarboxylates to form 3-amino-2-oxopropyl phosphate (AHAP). This chain is 4-hydroxythreonine-4-phosphate dehydrogenase, found in Rhizobium meliloti (strain 1021) (Ensifer meliloti).